The chain runs to 144 residues: Snaclec 6 (144 aa).

Residues M1–A23 form the signal peptide. 3 cysteine pairs are disulfide-bonded: C25–C36, C53–C142, and C119–C134. One can recognise a C-type lectin domain in the interval H32–K143.

Belongs to the snaclec family. Heterodimer; disulfide-linked.

It localises to the secreted. Its function is as follows. Interferes with one step of hemostasis (modulation of platelet aggregation, or coagulation cascade, for example). In Daboia siamensis (Eastern Russel's viper), this protein is Snaclec 6.